We begin with the raw amino-acid sequence, 24 residues long: Large ribosomal subunit protein uL30 (24 aa).

It belongs to the universal ribosomal protein uL30 family. Part of the 50S ribosomal subunit.

The sequence is that of Large ribosomal subunit protein uL30 (rpmD) from Ectopseudomonas mendocina (Pseudomonas mendocina).